A 245-amino-acid chain; its full sequence is MGLIWLLLLSLLEPSWPTTGPGTRLRRDAGGRGGVYEHLGGAPRRRKLYCATKYHLQLHPSGRVNGSLENSAYSILEITAVEVGVVAIKGLFSGRYLAMNKRGRLYASDHYNAECEFVERIHELGYNTYASRLYRTGSSGPGAQRQPGAQRPWYVSVNGKGRPRRGFKTRRTQKSSLFLPRVLGHKDHEMVRLLQSSQPRAPGEGSQPRQRRQKKQSPGDHGKMETLSTRATPSTQLHTGGLAVA.

The N-terminal stretch at 1–17 (MGLIWLLLLSLLEPSWP) is a signal peptide. An N-linked (GlcNAc...) asparagine glycan is attached at N65. Disordered stretches follow at residues 137–181 (GSSG…FLPR) and 195–245 (QSSQ…LAVA). Basic residues predominate over residues 161 to 173 (GRPRRGFKTRRTQ). The span at 226 to 238 (TLSTRATPSTQLH) shows a compositional bias: polar residues.

This sequence belongs to the heparin-binding growth factors family. In terms of assembly, interacts with FGFR1 and FGFR2. Affinity between fibroblast growth factors (FGFs) and their receptors is increased by heparan sulfate glycosaminoglycans that function as coreceptors. Glycosylated.

The protein resides in the nucleus. The protein localises to the endoplasmic reticulum. It is found in the golgi apparatus. Plays an important role in the regulation of embryonic development, cell proliferation, and cell differentiation. Required for normal ear development. The sequence is that of Fibroblast growth factor 3 (Fgf3) from Mus musculus (Mouse).